We begin with the raw amino-acid sequence, 252 residues long: Trans-aconitate 2-methyltransferase (252 aa).

It belongs to the methyltransferase superfamily. Tam family.

The protein localises to the cytoplasm. The enzyme catalyses trans-aconitate + S-adenosyl-L-methionine = (E)-3-(methoxycarbonyl)pent-2-enedioate + S-adenosyl-L-homocysteine. Its function is as follows. Catalyzes the S-adenosylmethionine monomethyl esterification of trans-aconitate. The polypeptide is Trans-aconitate 2-methyltransferase (Escherichia coli (strain UTI89 / UPEC)).